The chain runs to 390 residues: Acetylornithine aminotransferase (390 aa).

Residues 105-106 (GA) and phenylalanine 132 contribute to the pyridoxal 5'-phosphate site. Arginine 135 contacts N(2)-acetyl-L-ornithine. 217–220 (DEVQ) contributes to the pyridoxal 5'-phosphate binding site. Lysine 246 carries the N6-(pyridoxal phosphate)lysine modification. Serine 274 is a binding site for N(2)-acetyl-L-ornithine. Threonine 275 contributes to the pyridoxal 5'-phosphate binding site.

This sequence belongs to the class-III pyridoxal-phosphate-dependent aminotransferase family. ArgD subfamily. As to quaternary structure, homodimer. The cofactor is pyridoxal 5'-phosphate.

It localises to the cytoplasm. It carries out the reaction N(2)-acetyl-L-ornithine + 2-oxoglutarate = N-acetyl-L-glutamate 5-semialdehyde + L-glutamate. Its pathway is amino-acid biosynthesis; L-arginine biosynthesis; N(2)-acetyl-L-ornithine from L-glutamate: step 4/4. The protein is Acetylornithine aminotransferase of Methanothermobacter thermautotrophicus (strain ATCC 29096 / DSM 1053 / JCM 10044 / NBRC 100330 / Delta H) (Methanobacterium thermoautotrophicum).